Here is a 497-residue protein sequence, read N- to C-terminus: MSAKFEISFSKSVKLNGGLAILLKTAEADSAAGAETADPAGVIAKAAKIARFSAKSMATLDIVAPEGAPVERIVVVGIGKVGELTAHDWLKAGGAAASKVKNTDKVAIFIDVPGLETDARAAADFALGMLLRAYSFDAYKTKKNDDEEKSAKSVKVTIVTADATGARKAFSESEAIAGGVNLARDLVNEPPNALGPVEFAARAKELENLGVEVEILTEKEMRRLGMGALLGVAQGSVRPPRLAVMQWKGGKAKDRPVAFVGKGVVFDTGGISIKPAAGMEDMKGDMGGAAAVTGLMHVLAARKAAVNAVGIIGLVENMPDGNAQRPGDIVTSMSGQTIEVINTDAEGRLVLCDALWYCSDRFKPQFMINLATLTGAIVVALGNVHAGLFSNDDQLSAQLTAAGLSTNEKLWRMPLGKDYDKLIDSKFADMKNTGGRQAGSITAAHFLKRFVQDTPWAHLDIAGTAMGSPQDEINQSWGSGFGVRLLDELVRANCESR.

Mn(2+) contacts are provided by Lys262 and Asp267. The active site involves Lys274. Mn(2+)-binding residues include Asp285, Asp344, and Glu346. Arg348 is a catalytic residue.

The protein belongs to the peptidase M17 family. Mn(2+) serves as cofactor.

It is found in the cytoplasm. The catalysed reaction is Release of an N-terminal amino acid, Xaa-|-Yaa-, in which Xaa is preferably Leu, but may be other amino acids including Pro although not Arg or Lys, and Yaa may be Pro. Amino acid amides and methyl esters are also readily hydrolyzed, but rates on arylamides are exceedingly low.. It carries out the reaction Release of an N-terminal amino acid, preferentially leucine, but not glutamic or aspartic acids.. Its function is as follows. Presumably involved in the processing and regular turnover of intracellular proteins. Catalyzes the removal of unsubstituted N-terminal amino acids from various peptides. The polypeptide is Probable cytosol aminopeptidase (Rhizobium etli (strain ATCC 51251 / DSM 11541 / JCM 21823 / NBRC 15573 / CFN 42)).